A 64-amino-acid polypeptide reads, in one-letter code: Alpha-mammal toxin Lqq5 (64 aa).

Positions 2-64 (KDGYIVDDKN…VSIKEKGRCN (63 aa)) constitute an LCN-type CS-alpha/beta domain. Disulfide bonds link cysteine 12-cysteine 63, cysteine 16-cysteine 36, cysteine 22-cysteine 46, and cysteine 26-cysteine 48. Asparagine 64 carries the asparagine amide modification.

The protein belongs to the long (4 C-C) scorpion toxin superfamily. Sodium channel inhibitor family. Alpha subfamily. In terms of tissue distribution, expressed by the venom gland.

The protein localises to the secreted. Its function is as follows. Alpha toxins bind voltage-independently at site-3 of sodium channels (Nav) and inhibit the inactivation of the activated channels, thereby blocking neuronal transmission. Is active on mammals and bind with high affinity to rat brain synaptosome. Does not display phospholipid-binding activity. The sequence is that of Alpha-mammal toxin Lqq5 from Leiurus quinquestriatus quinquestriatus (Egyptian scorpion).